Consider the following 447-residue polypeptide: GTPase Der (447 aa).

2 consecutive EngA-type G domains span residues 4 to 165 and 180 to 357; these read QIIT…PEEE and LQIV…KIWN. GTP is bound by residues 10-17, 57-61, 119-122, 186-193, 233-237, and 298-301; these read GRPNVGKS, DTPGL, NKCE, GRPNAGKS, DTAGL, and NKWD. A KH-like domain is found at 358–443; sequence KKITTSKLNE…PIRFIYVKTK (86 aa).

It belongs to the TRAFAC class TrmE-Era-EngA-EngB-Septin-like GTPase superfamily. EngA (Der) GTPase family. Associates with the 50S ribosomal subunit.

In terms of biological role, GTPase that plays an essential role in the late steps of ribosome biogenesis. The sequence is that of GTPase Der from Rickettsia conorii (strain ATCC VR-613 / Malish 7).